We begin with the raw amino-acid sequence, 436 residues long: Glutamyl-tRNA reductase (436 aa).

Substrate contacts are provided by residues 49-52 (TCNR), serine 109, 114-116 (EGQ), and glutamine 120. The Nucleophile role is filled by cysteine 50. Residue 198–203 (GAGRMS) participates in NADP(+) binding.

This sequence belongs to the glutamyl-tRNA reductase family. In terms of assembly, homodimer.

It catalyses the reaction (S)-4-amino-5-oxopentanoate + tRNA(Glu) + NADP(+) = L-glutamyl-tRNA(Glu) + NADPH + H(+). It participates in porphyrin-containing compound metabolism; protoporphyrin-IX biosynthesis; 5-aminolevulinate from L-glutamyl-tRNA(Glu): step 1/2. Its pathway is porphyrin-containing compound metabolism; chlorophyll biosynthesis. Functionally, catalyzes the NADPH-dependent reduction of glutamyl-tRNA(Glu) to glutamate 1-semialdehyde (GSA). This Prochlorococcus marinus (strain AS9601) protein is Glutamyl-tRNA reductase.